Reading from the N-terminus, the 319-residue chain is UDP-3-O-acylglucosamine N-acyltransferase (319 aa).

Catalysis depends on H230, which acts as the Proton acceptor.

The protein belongs to the transferase hexapeptide repeat family. LpxD subfamily. As to quaternary structure, homotrimer.

The catalysed reaction is a UDP-3-O-[(3R)-3-hydroxyacyl]-alpha-D-glucosamine + a (3R)-hydroxyacyl-[ACP] = a UDP-2-N,3-O-bis[(3R)-3-hydroxyacyl]-alpha-D-glucosamine + holo-[ACP] + H(+). The protein operates within bacterial outer membrane biogenesis; LPS lipid A biosynthesis. Functionally, catalyzes the N-acylation of UDP-3-O-acylglucosamine using 3-hydroxyacyl-ACP as the acyl donor. Is involved in the biosynthesis of lipid A, a phosphorylated glycolipid that anchors the lipopolysaccharide to the outer membrane of the cell. The polypeptide is UDP-3-O-acylglucosamine N-acyltransferase (Campylobacter lari (strain RM2100 / D67 / ATCC BAA-1060)).